A 982-amino-acid chain; its full sequence is Filament-like plant protein 4 (982 aa).

2 coiled-coil regions span residues 39–83 (DQYT…VAKE) and 125–291 (EDRA…RKKL). The tract at residues 311–333 (DHRQDHRQRRSPVRPSSPLMSPM) is disordered. The segment covering 323-333 (VRPSSPLMSPM) has biased composition (low complexity). The stretch at 345–401 (DNMQKFHKENDLLTERLLAMEEETKMLKEALAKRNSELQVSRNLCAKTANRLQTLEA) forms a coiled coil. Over residues 423-433 (QNASNPPSMAS) the composition is skewed to polar residues. Disordered stretches follow at residues 423 to 466 (QNAS…AKIK) and 687 to 711 (QKDSSGEHYQNGCSQSSDSEIPDDC). The stretch at 452-475 (ELSQSNKDKANAKIKKTESANQLE) forms a coiled coil. A compositionally biased stretch (basic and acidic residues) spans 457–466 (NKDKANAKIK). Residues 693–705 (EHYQNGCSQSSDS) are compositionally biased toward polar residues. Positions 722–885 (ATCKFTTEEF…AECQETILLL (164 aa)) form a coiled coil. Composition is skewed to polar residues over residues 896–910 (TEQVASSPSQEQQAL) and 918–943 (ATSTNPQDSKLSSPSDKDTPSMNTMK). Residues 896–982 (TEQVASSPSQ…FSRFFSTKAK (87 aa)) are disordered.

The protein belongs to the FPP family. As to quaternary structure, interacts with WPP/MAF proteins.

This chain is Filament-like plant protein 4 (FPP4), found in Arabidopsis thaliana (Mouse-ear cress).